We begin with the raw amino-acid sequence, 139 residues long: Lamprin 0.9 (139 aa).

The first 19 residues, 1 to 19 (MAAAIQALLVLALLHLATA), serve as a signal peptide directing secretion. 8 consecutive repeat copies span residues 42 to 46 (GGLGY), 47 to 51 (GGLGY), 52 to 56 (GGLGV), 57 to 61 (AGLGV), 62 to 66 (AGLGY), 67 to 71 (GGLGY), 92 to 96 (GGLGY), and 106 to 110 (GGLGY). The segment at 42-110 (GGLGYGGLGY…YHHALGGLGY (69 aa)) is 8 X 5 AA approximate repeats.

In terms of assembly, the polymeric lamprin chains self-aggregate to form fibers and have secondary structures particularly rich in beta-sheets and in beta-turns.

Its subcellular location is the secreted. The protein resides in the extracellular space. The protein localises to the extracellular matrix. Its function is as follows. Self-aggregating protein that is part of the soluble form of lamprin. The chain is Lamprin 0.9 from Petromyzon marinus (Sea lamprey).